We begin with the raw amino-acid sequence, 400 residues long: Forkhead box protein Q1 (400 aa).

Positions 1–112 are disordered; sequence MKLEVFVPRA…EGARSKPYTR (112 aa). Over residues 32–54 the composition is skewed to low complexity; the sequence is LSAAGDDSLGSDGDCAANSPAAG. 2 stretches are compositionally biased toward gly residues: residues 55-66 and 95-104; these read SGAGDLEGGGGE and CAGGVGGGEG. Positions 115–210 form a DNA-binding region, fork-head; that stretch reads KPPYSYIALI…ADGVFRRRRK (96 aa). Residues 213–264 are disordered; it reads SHRTTVSASGLRPEEAPPGPAGTPQPAPAARSSPIARSPARQEERSSPASKF. Residues 228–239 show a composition bias toward pro residues; the sequence is APPGPAGTPQPA. The span at 240-251 shows a compositional bias: low complexity; that stretch reads PAARSSPIARSP.

In terms of tissue distribution, expressed in kidney and stomach. Expression in the outer medulla of the kidney and the transitional epithelium. Expressed in the hair follicle medulla.

The protein localises to the nucleus. In terms of biological role, plays a role in hair follicle differentiation. The polypeptide is Forkhead box protein Q1 (Foxq1) (Mus musculus (Mouse)).